The chain runs to 350 residues: Probable aldo-keto reductase 1 (350 aa).

The active-site Proton donor is Tyr-67. His-135 contributes to the substrate binding site. Residue 214-224 (SPLGKGFFSSG) coordinates NADP(+).

This sequence belongs to the aldo/keto reductase family.

The chain is Probable aldo-keto reductase 1 from Oryza sativa subsp. indica (Rice).